Consider the following 349-residue polypeptide: GMP reductase (349 aa).

Position 108–131 (108–131 (IDFLKIKKIFLLSSELKYICIDVA)) interacts with NADP(+). Residues glycine 181 and glycine 183 each coordinate K(+). Residue cysteine 186 is the Thioimidate intermediate of the active site. 216–239 (IISDGGCTVSGDIAKAFGGGADFV) is a binding site for NADP(+).

The protein belongs to the IMPDH/GMPR family. GuaC type 1 subfamily. In terms of assembly, homotetramer.

It catalyses the reaction IMP + NH4(+) + NADP(+) = GMP + NADPH + 2 H(+). Functionally, catalyzes the irreversible NADPH-dependent deamination of GMP to IMP. It functions in the conversion of nucleobase, nucleoside and nucleotide derivatives of G to A nucleotides, and in maintaining the intracellular balance of A and G nucleotides. The chain is GMP reductase from Buchnera aphidicola subsp. Acyrthosiphon pisum (strain Tuc7).